The chain runs to 327 residues: Methionyl-tRNA formyltransferase (327 aa).

121 to 124 (SLLP) provides a ligand contact to (6S)-5,6,7,8-tetrahydrofolate.

Belongs to the Fmt family.

The catalysed reaction is L-methionyl-tRNA(fMet) + (6R)-10-formyltetrahydrofolate = N-formyl-L-methionyl-tRNA(fMet) + (6S)-5,6,7,8-tetrahydrofolate + H(+). Attaches a formyl group to the free amino group of methionyl-tRNA(fMet). The formyl group appears to play a dual role in the initiator identity of N-formylmethionyl-tRNA by promoting its recognition by IF2 and preventing the misappropriation of this tRNA by the elongation apparatus. In Paraburkholderia phymatum (strain DSM 17167 / CIP 108236 / LMG 21445 / STM815) (Burkholderia phymatum), this protein is Methionyl-tRNA formyltransferase.